Reading from the N-terminus, the 210-residue chain is Cytochrome c biogenesis ATP-binding export protein CcmA (210 aa).

Residues 4–208 (VPTLSFSKLG…GAIPAQLLEL (205 aa)) form the ABC transporter domain. Residue 39–46 (GANGVGKT) participates in ATP binding.

This sequence belongs to the ABC transporter superfamily. CcmA exporter (TC 3.A.1.107) family. As to quaternary structure, the complex is composed of two ATP-binding proteins (CcmA) and two transmembrane proteins (CcmB).

It localises to the cell inner membrane. The catalysed reaction is heme b(in) + ATP + H2O = heme b(out) + ADP + phosphate + H(+). Its function is as follows. Part of the ABC transporter complex CcmAB involved in the biogenesis of c-type cytochromes; once thought to export heme, this seems not to be the case, but its exact role is uncertain. Responsible for energy coupling to the transport system. The polypeptide is Cytochrome c biogenesis ATP-binding export protein CcmA (Albidiferax ferrireducens (strain ATCC BAA-621 / DSM 15236 / T118) (Rhodoferax ferrireducens)).